Reading from the N-terminus, the 185-residue chain is Stathmin-4 (185 aa).

Positions 48–185 constitute an SLD domain; that stretch reads SDMEVIELNK…EVRKNKEATR (138 aa). The stretch at 90 to 185 forms a coiled coil; it reads SLEEIQKKLE…EVRKNKEATR (96 aa). A disordered region spans residues 165–185; that stretch reads ERLQEKDKHAEEVRKNKEATR. Positions 166–185 are enriched in basic and acidic residues; the sequence is RLQEKDKHAEEVRKNKEATR.

Belongs to the stathmin family. As to expression, nervous tissue.

This Xenopus laevis (African clawed frog) protein is Stathmin-4 (stmn4).